Here is an 89-residue protein sequence, read N- to C-terminus: Large ribosomal subunit protein bL31B (89 aa).

Residues 70–89 (RVQRFESRRRRRQQQSGEQG) are disordered.

Belongs to the bacterial ribosomal protein bL31 family. Type B subfamily. In terms of assembly, part of the 50S ribosomal subunit.

This chain is Large ribosomal subunit protein bL31B, found in Rubrobacter xylanophilus (strain DSM 9941 / JCM 11954 / NBRC 16129 / PRD-1).